Consider the following 290-residue polypeptide: 33 kDa chaperonin (290 aa).

Cystine bridges form between cysteine 235–cysteine 237 and cysteine 268–cysteine 271.

It belongs to the HSP33 family. Under oxidizing conditions two disulfide bonds are formed involving the reactive cysteines. Under reducing conditions zinc is bound to the reactive cysteines and the protein is inactive.

It is found in the cytoplasm. Its function is as follows. Redox regulated molecular chaperone. Protects both thermally unfolding and oxidatively damaged proteins from irreversible aggregation. Plays an important role in the bacterial defense system toward oxidative stress. The polypeptide is 33 kDa chaperonin (Streptococcus pyogenes serotype M49).